A 404-amino-acid chain; its full sequence is Cysteine desulfurase IscS (404 aa).

Pyridoxal 5'-phosphate-binding positions include 75-76 (AT), N155, Q183, and 203-205 (SAH). N6-(pyridoxal phosphate)lysine is present on K206. T243 contacts pyridoxal 5'-phosphate. C328 functions as the Cysteine persulfide intermediate in the catalytic mechanism. C328 lines the [2Fe-2S] cluster pocket.

The protein belongs to the class-V pyridoxal-phosphate-dependent aminotransferase family. NifS/IscS subfamily. In terms of assembly, homodimer. Forms a heterotetramer with IscU, interacts with other sulfur acceptors. Requires pyridoxal 5'-phosphate as cofactor.

The protein localises to the cytoplasm. It catalyses the reaction (sulfur carrier)-H + L-cysteine = (sulfur carrier)-SH + L-alanine. Its pathway is cofactor biosynthesis; iron-sulfur cluster biosynthesis. Functionally, master enzyme that delivers sulfur to a number of partners involved in Fe-S cluster assembly, tRNA modification or cofactor biosynthesis. Catalyzes the removal of elemental sulfur atoms from cysteine to produce alanine. Functions as a sulfur delivery protein for Fe-S cluster synthesis onto IscU, an Fe-S scaffold assembly protein, as well as other S acceptor proteins. This Stutzerimonas stutzeri (strain A1501) (Pseudomonas stutzeri) protein is Cysteine desulfurase IscS.